The primary structure comprises 501 residues: Lysine--tRNA ligase (501 aa).

E402 and E409 together coordinate Mg(2+).

The protein belongs to the class-II aminoacyl-tRNA synthetase family. Homodimer. The cofactor is Mg(2+).

It is found in the cytoplasm. It catalyses the reaction tRNA(Lys) + L-lysine + ATP = L-lysyl-tRNA(Lys) + AMP + diphosphate. The protein is Lysine--tRNA ligase of Helicobacter pylori (strain P12).